Here is a 555-residue protein sequence, read N- to C-terminus: Hydroxylamine reductase (555 aa).

Residues cysteine 3, cysteine 6, cysteine 18, and cysteine 25 each coordinate [4Fe-4S] cluster. The hybrid [4Fe-2O-2S] cluster site is built by histidine 252, glutamate 276, cysteine 320, cysteine 407, cysteine 435, cysteine 460, glutamate 494, and lysine 496. Cysteine persulfide is present on cysteine 407.

The protein belongs to the HCP family. Requires [4Fe-4S] cluster as cofactor. The cofactor is hybrid [4Fe-2O-2S] cluster.

It is found in the cytoplasm. It carries out the reaction A + NH4(+) + H2O = hydroxylamine + AH2 + H(+). Catalyzes the reduction of hydroxylamine to form NH(3) and H(2)O. The protein is Hydroxylamine reductase of Burkholderia lata (strain ATCC 17760 / DSM 23089 / LMG 22485 / NCIMB 9086 / R18194 / 383).